The sequence spans 119 residues: T cell receptor alpha variable 29/delta variable 5 (119 aa).

A signal peptide spans 1-21 (MAMLLGASVLILWLQPDWVNS). One can recognise an Ig-like domain in the interval 22-119 (QQKNDDQQVK…DSAVYFCAAS (98 aa)). A disulfide bridge connects residues C49 and C116. N93 carries N-linked (GlcNAc...) asparagine glycosylation.

Alpha-beta TR is a heterodimer composed of an alpha and beta chain; disulfide-linked. The alpha-beta TR is associated with the transmembrane signaling CD3 coreceptor proteins to form the TR-CD3 (TcR or TCR). The assembly of alpha-beta TR heterodimers with CD3 occurs in the endoplasmic reticulum where a single alpha-beta TR heterodimer associates with one CD3D-CD3E heterodimer, one CD3G-CD3E heterodimer and one CD247 homodimer forming a stable octameric structure. CD3D-CD3E and CD3G-CD3E heterodimers preferentially associate with TR alpha and TR beta chains, respectively. The association of the CD247 homodimer is the last step of TcR assembly in the endoplasmic reticulum and is required for transport to the cell surface.

It is found in the cell membrane. Its function is as follows. V region of the variable domain of T cell receptor (TR) alpha chain that participates in the antigen recognition. Alpha-beta T cell receptors are antigen specific receptors which are essential to the immune response and are present on the cell surface of T lymphocytes. Recognize peptide-major histocompatibility (MH) (pMH) complexes that are displayed by antigen presenting cells (APC), a prerequisite for efficient T cell adaptive immunity against pathogens. Binding of alpha-beta TR to pMH complex initiates TR-CD3 clustering on the cell surface and intracellular activation of LCK that phosphorylates the ITAM motifs of CD3G, CD3D, CD3E and CD247 enabling the recruitment of ZAP70. In turn ZAP70 phosphorylates LAT, which recruits numerous signaling molecules to form the LAT signalosome. The LAT signalosome propagates signal branching to three major signaling pathways, the calcium, the mitogen-activated protein kinase (MAPK) kinase and the nuclear factor NF-kappa-B (NF-kB) pathways, leading to the mobilization of transcription factors that are critical for gene expression and essential for T cell growth and differentiation. The T cell repertoire is generated in the thymus, by V-(D)-J rearrangement. This repertoire is then shaped by intrathymic selection events to generate a peripheral T cell pool of self-MH restricted, non-autoaggressive T cells. Post-thymic interaction of alpha-beta TR with the pMH complexes shapes TR structural and functional avidity. The chain is T cell receptor alpha variable 29/delta variable 5 from Homo sapiens (Human).